The sequence spans 695 residues: ATP-dependent zinc metalloprotease FtsH (695 aa).

Over 1–15 the chain is Cytoplasmic; sequence MNNNKQPKQGNFVKN. The chain crosses the membrane as a helical span at residues 16-36; the sequence is ILMWVILAIVVVVGFNFFFSS. At 37 to 139 the chain is on the extracellular side; it reads NQSSVDKISY…QASSSGMWVQ (103 aa). A helical transmembrane segment spans residues 140 to 160; the sequence is ILSYIIPMLLFVGIFWLMMGG. Residues 161-695 are Cytoplasmic-facing; that stretch reads MGARGGGGGG…KEKSEDETAE (535 aa). 233-240 lines the ATP pocket; the sequence is GPPGTGKT. A Zn(2+)-binding site is contributed by His456. Glu457 is a catalytic residue. Zn(2+) is bound by residues His460 and Asp532. The interval 657–695 is disordered; that stretch reads KDANANVDDFSNINIYNGDEKTDSKPEENKEKSEDETAE. Positions 674–695 are enriched in basic and acidic residues; sequence GDEKTDSKPEENKEKSEDETAE.

The protein in the central section; belongs to the AAA ATPase family. It in the C-terminal section; belongs to the peptidase M41 family. Homohexamer. Zn(2+) is required as a cofactor.

The protein resides in the cell membrane. In terms of biological role, acts as a processive, ATP-dependent zinc metallopeptidase for both cytoplasmic and membrane proteins. Plays a role in the quality control of integral membrane proteins. This chain is ATP-dependent zinc metalloprotease FtsH, found in Lactococcus lactis subsp. lactis (strain IL1403) (Streptococcus lactis).